The chain runs to 545 residues: DNA-binding protein REPIN1 (545 aa).

The interval M1–K50 is disordered. Position 27 is a phosphoserine (S27). The residue at position 39 (K39) is an N6-acetyllysine. A C2H2-type 1; atypical zinc finger spans residues H52–C74. 2 consecutive C2H2-type zinc fingers follow at residues L80–H102 and F111–H133. A C2H2-type 4; atypical zinc finger spans residues I140–C162. 11 consecutive C2H2-type zinc fingers follow at residues F172 to H194, F229 to H251, H257 to H279, Y285 to H307, H353 to H375, F381 to H403, F409 to H431, F437 to H459, Y465 to H487, Y493 to H515, and F521 to H543. K269 carries the N6-acetyllysine modification.

Homodimers and homomultimers. Found in a complex with RIP60 and RIP100.

The protein localises to the nucleus. Its subcellular location is the cytoplasm. The protein resides in the cytosol. Sequence-specific double-stranded DNA-binding protein. Binds ATT-rich and T-rich DNA sequences and facilitates DNA bending. May regulate the expression of genes involved in cellular fatty acid import, including SCARB1/CD36, and genes involved in lipid droplet formation. May regulate the expression of LCN2, and thereby influence iron metabolism and apoptosis-related pathways. May regulate the expression of genes involved in glucose transport. The polypeptide is DNA-binding protein REPIN1 (Repin1) (Mus musculus (Mouse)).